A 614-amino-acid polypeptide reads, in one-letter code: UvrABC system protein C (614 aa).

Residues 20–98 (TAPGVYRMYA…IKSLSPRYNV (79 aa)) enclose the GIY-YIG domain. The UVR domain maps to 207–242 (DELTRELGEQMQAASEALEFEQAARLRDLISSLRSM).

It belongs to the UvrC family. As to quaternary structure, interacts with UvrB in an incision complex.

The protein localises to the cytoplasm. Functionally, the UvrABC repair system catalyzes the recognition and processing of DNA lesions. UvrC both incises the 5' and 3' sides of the lesion. The N-terminal half is responsible for the 3' incision and the C-terminal half is responsible for the 5' incision. This is UvrABC system protein C from Stenotrophomonas maltophilia (strain R551-3).